The sequence spans 287 residues: Glycine--tRNA ligase alpha subunit (287 aa).

It belongs to the class-II aminoacyl-tRNA synthetase family. Tetramer of two alpha and two beta subunits.

Its subcellular location is the cytoplasm. The enzyme catalyses tRNA(Gly) + glycine + ATP = glycyl-tRNA(Gly) + AMP + diphosphate. In Campylobacter jejuni subsp. jejuni serotype O:6 (strain 81116 / NCTC 11828), this protein is Glycine--tRNA ligase alpha subunit.